Consider the following 250-residue polypeptide: Adenosylcobinamide-GDP ribazoletransferase (250 aa).

Transmembrane regions (helical) follow at residues isoleucine 33–isoleucine 53, isoleucine 63–glycine 83, leucine 109–threonine 129, leucine 137–isoleucine 157, phenylalanine 180–phenylalanine 200, and isoleucine 203–glycine 223.

This sequence belongs to the CobS family. The cofactor is Mg(2+).

The protein resides in the cell membrane. The enzyme catalyses alpha-ribazole + adenosylcob(III)inamide-GDP = adenosylcob(III)alamin + GMP + H(+). It catalyses the reaction alpha-ribazole 5'-phosphate + adenosylcob(III)inamide-GDP = adenosylcob(III)alamin 5'-phosphate + GMP + H(+). It functions in the pathway cofactor biosynthesis; adenosylcobalamin biosynthesis; adenosylcobalamin from cob(II)yrinate a,c-diamide: step 7/7. Its function is as follows. Joins adenosylcobinamide-GDP and alpha-ribazole to generate adenosylcobalamin (Ado-cobalamin). Also synthesizes adenosylcobalamin 5'-phosphate from adenosylcobinamide-GDP and alpha-ribazole 5'-phosphate. This chain is Adenosylcobinamide-GDP ribazoletransferase, found in Thermoanaerobacter pseudethanolicus (strain ATCC 33223 / 39E) (Clostridium thermohydrosulfuricum).